The chain runs to 359 residues: Aspartate carbamoyltransferase catalytic subunit (359 aa).

2 residues coordinate carbamoyl phosphate: Arg52 and Thr53. Lys81 lines the L-aspartate pocket. Arg102, His130, and Gln133 together coordinate carbamoyl phosphate. Arg163 and Arg224 together coordinate L-aspartate. Leu264 and Pro265 together coordinate carbamoyl phosphate.

This sequence belongs to the aspartate/ornithine carbamoyltransferase superfamily. ATCase family. As to quaternary structure, heterododecamer (2C3:3R2) of six catalytic PyrB chains organized as two trimers (C3), and six regulatory PyrI chains organized as three dimers (R2).

The catalysed reaction is carbamoyl phosphate + L-aspartate = N-carbamoyl-L-aspartate + phosphate + H(+). It participates in pyrimidine metabolism; UMP biosynthesis via de novo pathway; (S)-dihydroorotate from bicarbonate: step 2/3. Catalyzes the condensation of carbamoyl phosphate and aspartate to form carbamoyl aspartate and inorganic phosphate, the committed step in the de novo pyrimidine nucleotide biosynthesis pathway. The chain is Aspartate carbamoyltransferase catalytic subunit from Brachyspira hyodysenteriae (strain ATCC 49526 / WA1).